A 361-amino-acid chain; its full sequence is Peptide chain release factor 1 (361 aa).

The residue at position 235 (Gln-235) is an N5-methylglutamine.

This sequence belongs to the prokaryotic/mitochondrial release factor family. Methylated by PrmC. Methylation increases the termination efficiency of RF1.

It is found in the cytoplasm. Peptide chain release factor 1 directs the termination of translation in response to the peptide chain termination codons UAG and UAA. The chain is Peptide chain release factor 1 from Xanthomonas campestris pv. campestris (strain 8004).